The sequence spans 791 residues: ABC multidrug transporter mdr2 (791 aa).

N-linked (GlcNAc...) asparagine glycosylation is present at Asn147. Transmembrane regions (helical) follow at residues 182–202 and 220–240; these read ALAFLFLLVSSGITMSIPFSI and LFGLSLPMFYGALAGILTLGA. The ABC transmembrane type-1 domain occupies 182–471; sequence ALAFLFLLVS…LSSFYSELMK (290 aa). An N-linked (GlcNAc...) asparagine glycan is attached at Asn303. 2 helical membrane-spanning segments follow: residues 307-324 and 326-346; these read GLRAAVSGAAGFGLMAYV and LKLSSILALLLPPIGLGAFFY. N-linked (GlcNAc...) asparagine glycosylation is found at Asn352 and Asn421. The next 2 membrane-spanning stretches (helical) occupy residues 422–442 and 445–465; these read MTILALLYVGGGMVQSGAITI and LTSFLMYTAYAGSSMFGLSSF. Residues 504–741 form the ABC transporter domain; that stretch reads IRFENVTFSY…PDGAFTKLME (238 aa). Asn508 is a glycosylation site (N-linked (GlcNAc...) asparagine). 539-546 lines the ATP pocket; that stretch reads GPSGGGKS. N-linked (GlcNAc...) asparagine glycosylation is present at Asn692. Over residues 754–769 the composition is skewed to polar residues; that stretch reads ANTPANPVAQETSWDL. The tract at residues 754–791 is disordered; that stretch reads ANTPANPVAQETSWDLQSDDGTEISEDTNIPSEPRTID. Residues 770-779 show a composition bias toward acidic residues; sequence QSDDGTEISE.

The protein belongs to the ABC transporter superfamily. ABCB family. Mitochondrial peptide exporter (TC 3.A.1.212) subfamily.

Its subcellular location is the cell membrane. Its function is as follows. Pleiotropic ABC efflux transporter that may be involved in A.fumigatus adaptation to azoles. The protein is ABC multidrug transporter mdr2 of Aspergillus fumigatus (strain ATCC MYA-4609 / CBS 101355 / FGSC A1100 / Af293) (Neosartorya fumigata).